Reading from the N-terminus, the 253-residue chain is MLNKRVIPCLDVNNGRVVKGTSFVNLRDAGNPVELAARYYREGADELVFLDISATTEERKTMAEVVEQVSKEVFIPLCVGGGLRSIADMNTLLRAGADKVSINSAAVSDPDLISRGAEKFGRQCIVVAIDAKREGSGWQVYTHSGKKPAGLDAVEWAIKAEALGAGEILLTSIDADGKNTGYDNELNREISSRLNIPVIASGGAGSPEDLYNALDKGQADAVLAASIFHYGRYTIAEVKQYLKSKGLPVRLEN.

Active-site residues include Asp-11 and Asp-130.

It belongs to the HisA/HisF family. In terms of assembly, heterodimer of HisH and HisF.

The protein resides in the cytoplasm. It catalyses the reaction 5-[(5-phospho-1-deoxy-D-ribulos-1-ylimino)methylamino]-1-(5-phospho-beta-D-ribosyl)imidazole-4-carboxamide + L-glutamine = D-erythro-1-(imidazol-4-yl)glycerol 3-phosphate + 5-amino-1-(5-phospho-beta-D-ribosyl)imidazole-4-carboxamide + L-glutamate + H(+). It participates in amino-acid biosynthesis; L-histidine biosynthesis; L-histidine from 5-phospho-alpha-D-ribose 1-diphosphate: step 5/9. IGPS catalyzes the conversion of PRFAR and glutamine to IGP, AICAR and glutamate. The HisF subunit catalyzes the cyclization activity that produces IGP and AICAR from PRFAR using the ammonia provided by the HisH subunit. This chain is Imidazole glycerol phosphate synthase subunit HisF, found in Dehalococcoides mccartyi (strain ATCC BAA-2266 / KCTC 15142 / 195) (Dehalococcoides ethenogenes (strain 195)).